Reading from the N-terminus, the 297-residue chain is MSAVEAPSASQAIWPELTEDHPLSQLNSRLPTILSEAGHSQIWGVTLTYSTPPTFSSLIILQKFLRSVDNNVDEAATALGKTLKWRKDWGLDARADKKEKENFGPDFEGLGYVTKIKKNDGGDEIVTWNVYGAVKDLKSTFGDLDRFLRWRVNLMEEAIAHLHLATTSTPIPDFNAGIDPHRMAQVHLYEGVSFLRMDPHVKAASKATIELMAANYPELLSRKFFVGVPLIMSWMFQAVRMFVSAETAKKFVVISYKENLANELGELEGVPKEYGGKGLSLGELQNQLRGEDAVTSS.

A CRAL-TRIO domain is found at 106-282; sequence DFEGLGYVTK…EYGGKGLSLG (177 aa). The heme site is built by Tyr131, Arg151, His187, Tyr189, and Lys223.

This sequence belongs to the SFH5 family. Heme b is required as a cofactor.

Its subcellular location is the cytoplasm. The protein localises to the endoplasmic reticulum membrane. It is found in the microsome membrane. The catalysed reaction is a 1,2-diacyl-sn-glycero-3-phospho-(1D-myo-inositol)(in) = a 1,2-diacyl-sn-glycero-3-phospho-(1D-myo-inositol)(out). Its function is as follows. Non-classical phosphatidylinositol (PtdIns) transfer protein (PITP), which exhibits PtdIns-binding/transfer activity in the absence of detectable PtdCho-binding/transfer activity. Regulates PtdIns(4,5)P2 homeostasis at the plasma membrane. Heme-binding protein that may play a role in organic oxidant-induced stress responses. The protein is Phosphatidylinositol transfer protein SFH5 (SFH5) of Cryptococcus neoformans var. neoformans serotype D (strain JEC21 / ATCC MYA-565) (Filobasidiella neoformans).